We begin with the raw amino-acid sequence, 593 residues long: Actin-histidine N-methyltransferase (593 aa).

Residues 1-21 form a disordered region; the sequence is MGKKSRVKTQKSGTGATAAVS. Residues R75, 104–106, R254, 275–279, and 325–327 each bind S-adenosyl-L-methionine; these read EGF, DMCNH, and SGF. In terms of domain architecture, SET spans 94 to 314; that stretch reads EGFEIANFEE…AGEQIYIFYG (221 aa). Residues 549 to 593 form a disordered region; sequence GFVNGENSLFNGTKSESENLIKEESNRETEDAKESSSESTDEVKE. Residues 553–562 show a composition bias toward polar residues; sequence GENSLFNGTK. A compositionally biased stretch (basic and acidic residues) spans 563–593; sequence SESENLIKEESNRETEDAKESSSESTDEVKE.

Belongs to the class V-like SAM-binding methyltransferase superfamily. SETD3 actin-histidine methyltransferase family.

It is found in the cytoplasm. The catalysed reaction is L-histidyl-[protein] + S-adenosyl-L-methionine = N(tele)-methyl-L-histidyl-[protein] + S-adenosyl-L-homocysteine + H(+). Its function is as follows. Protein-histidine N-methyltransferase that specifically mediates 3-methylhistidine (tele-methylhistidine) methylation of actin at 'His-73'. Does not have protein-lysine N-methyltransferase activity and probably only catalyzes histidine methylation of actin. In Gallus gallus (Chicken), this protein is Actin-histidine N-methyltransferase.